We begin with the raw amino-acid sequence, 198 residues long: Recombination protein RecR (198 aa).

Residues 56 to 71 (CHVCGNVDTGDPCGIC) form a C4-type zinc finger. Residues 79–174 (RMLCVVEEVA…RLTQLAHGLP (96 aa)) enclose the Toprim domain.

This sequence belongs to the RecR family.

Its function is as follows. May play a role in DNA repair. It seems to be involved in an RecBC-independent recombinational process of DNA repair. It may act with RecF and RecO. The chain is Recombination protein RecR from Rhizorhabdus wittichii (strain DSM 6014 / CCUG 31198 / JCM 15750 / NBRC 105917 / EY 4224 / RW1) (Sphingomonas wittichii).